A 697-amino-acid chain; its full sequence is Disintegrin and metalloproteinase domain-containing protein 26A (697 aa).

The first 22 residues, 1 to 22, serve as a signal peptide directing secretion; sequence MFLKFCLWTMFFFSAWSPIGHA. Positions 23-187 are excised as a propeptide; sequence KYSSLLEVVT…NAPTLLQIPY (165 aa). N-linked (GlcNAc...) asparagine glycosylation occurs at Asn-127. A Cysteine switch motif is present at residues 159–166; sequence MRCGLSEE. Position 161 (Cys-161) interacts with Zn(2+). Residues 188–671 lie on the Extracellular side of the membrane; it reads ENWWTHHRFI…PPLPLSHSKW (484 aa). In terms of domain architecture, Peptidase M12B spans 195 to 385; that stretch reads RFIEYFVVLD…TKRSCLYDIP (191 aa). An N-linked (GlcNAc...) asparagine glycan is attached at Asn-214. Intrachain disulfides connect Cys-305-Cys-380, Cys-344-Cys-366, and Cys-346-Cys-351. His-329 serves as a coordination point for Zn(2+). The active site involves Glu-330. Zn(2+) is bound by residues His-333 and His-339. N-linked (GlcNAc...) asparagine glycans are attached at residues Asn-365, Asn-391, Asn-464, Asn-506, Asn-531, and Asn-573. In terms of domain architecture, Disintegrin spans 392–478; that stretch reads LTVCGNKVVE…ECPGDVYKAD (87 aa). Cys-450 and Cys-470 are disulfide-bonded. One can recognise an EGF-like domain in the interval 616–649; the sequence is LVSNCSPQLYHMQGICNNKQHCHCGVTWKPPDCQ. 2 disulfides stabilise this stretch: Cys-620–Cys-631 and Cys-639–Cys-648. The helical transmembrane segment at 672-692 threads the bilayer; that stretch reads IVYILIVLDVCIVIIIYLFSF. The Cytoplasmic segment spans residues 693-697; the sequence is YKLSK.

It depends on Zn(2+) as a cofactor. As to expression, expressed in sperm (at protein level). Expressed specifically in testis.

The protein localises to the membrane. In terms of biological role, sperm surface membrane protein that may be involved in spermatogenesis and fertilization. The sequence is that of Disintegrin and metalloproteinase domain-containing protein 26A from Mus musculus (Mouse).